The sequence spans 44 residues: Defensin-like protein 1 (44 aa).

The residue at position 1 (Q1) is a Pyrrolidone carboxylic acid. Cysteines 15 and 36 form a disulfide.

This sequence belongs to the DEFL family. As to quaternary structure, forms oligomers in its native state.

The protein resides in the secreted. In terms of biological role, possesses antifungal activity sensitive to inorganic cations. The protein is Defensin-like protein 1 (AFP1) of Brassica napus (Rape).